A 329-amino-acid polypeptide reads, in one-letter code: Cathepsin K (329 aa).

The first 15 residues, 1-15, serve as a signal peptide directing secretion; the sequence is MWVFKFLLLPMVSFA. The propeptide at 16-114 is activation peptide; sequence LSPEEMLDTQ…TLYTPEWEGR (99 aa). N-linked (GlcNAc...) asparagine glycosylation occurs at Asn-103. Cystine bridges form between Cys-136–Cys-177 and Cys-170–Cys-210. Cys-139 is a catalytic residue. N-linked (GlcNAc...) asparagine glycosylation occurs at Asn-213. Residues Cys-269 and Cys-318 are joined by a disulfide bond. Active-site residues include His-276 and Asn-296.

It belongs to the peptidase C1 family. As to expression, predominantly expressed in bones. Expressed in thyroid epithelial cells.

The protein resides in the lysosome. The protein localises to the secreted. Its subcellular location is the apical cell membrane. The catalysed reaction is Broad proteolytic activity. With small-molecule substrates and inhibitors, the major determinant of specificity is P2, which is preferably Leu, Met &gt; Phe, and not Arg.. Thiol protease involved in osteoclastic bone resorption. Displays potent endoprotease activity against fibrinogen at acid pH. May play an important role in extracellular matrix degradation. Involved in the release of thyroid hormone thyroxine (T4) by limited proteolysis of TG/thyroglobulin in the thyroid follicle lumen. The polypeptide is Cathepsin K (Ctsk) (Mus musculus (Mouse)).